Consider the following 336-residue polypeptide: Glucokinase (336 aa).

An ATP-binding site is contributed by 13-18; that stretch reads ADVGGT.

Belongs to the bacterial glucokinase family.

It localises to the cytoplasm. It catalyses the reaction D-glucose + ATP = D-glucose 6-phosphate + ADP + H(+). This Cupriavidus metallidurans (strain ATCC 43123 / DSM 2839 / NBRC 102507 / CH34) (Ralstonia metallidurans) protein is Glucokinase.